A 375-amino-acid polypeptide reads, in one-letter code: Histidine biosynthesis bifunctional protein HisB (375 aa).

Positions 1 to 168 (MTPILFVDRD…GIAHELADAP (168 aa)) are histidinol-phosphatase. Asp-8 (nucleophile) is an active-site residue. 3 residues coordinate Mg(2+): Asp-8, Asp-10, and Asp-128. The active-site Proton donor is the Asp-10. The tract at residues 169 to 375 (RRAVVQRNTK…TALPSTKGAL (207 aa)) is imidazoleglycerol-phosphate dehydratase.

In the N-terminal section; belongs to the histidinol-phosphatase family. It in the C-terminal section; belongs to the imidazoleglycerol-phosphate dehydratase family. It depends on Mg(2+) as a cofactor.

The protein localises to the cytoplasm. It carries out the reaction D-erythro-1-(imidazol-4-yl)glycerol 3-phosphate = 3-(imidazol-4-yl)-2-oxopropyl phosphate + H2O. The enzyme catalyses L-histidinol phosphate + H2O = L-histidinol + phosphate. Its pathway is amino-acid biosynthesis; L-histidine biosynthesis; L-histidine from 5-phospho-alpha-D-ribose 1-diphosphate: step 6/9. It functions in the pathway amino-acid biosynthesis; L-histidine biosynthesis; L-histidine from 5-phospho-alpha-D-ribose 1-diphosphate: step 8/9. The sequence is that of Histidine biosynthesis bifunctional protein HisB from Xanthomonas campestris pv. campestris (strain 8004).